Consider the following 105-residue polypeptide: Large ribosomal subunit protein bL21 (105 aa).

The protein belongs to the bacterial ribosomal protein bL21 family. As to quaternary structure, part of the 50S ribosomal subunit. Contacts protein L20.

This protein binds to 23S rRNA in the presence of protein L20. This chain is Large ribosomal subunit protein bL21, found in Rickettsia africae (strain ESF-5).